A 512-amino-acid chain; its full sequence is Respiratory nitrate reductase 1 beta chain (512 aa).

3 consecutive 4Fe-4S ferredoxin-type domains span residues 7–35, 175–206, and 208–237; these read VGMV…SREG, TFMM…KREE, and GIVL…FNWK. Positions 16, 19, 22, 26, 184, 187, and 192 each coordinate [4Fe-4S] cluster. Residues Cys196, Cys217, and Cys223 each contribute to the [3Fe-4S] cluster site. Positions 227, 244, 247, 259, and 263 each coordinate [4Fe-4S] cluster.

As to quaternary structure, dimer of heterotrimers each composed of an alpha, a beta and a gamma chain. Alpha and beta are catalytic chains; gamma chains are involved in binding the enzyme complex to the cytoplasmic membrane. It depends on [4Fe-4S] cluster as a cofactor. [3Fe-4S] cluster is required as a cofactor.

Its subcellular location is the cell membrane. It catalyses the reaction nitrate + a quinol = a quinone + nitrite + H2O. Its function is as follows. The nitrate reductase enzyme complex allows S.flexneri to use nitrate as an electron acceptor during anaerobic growth. The beta chain is an electron transfer unit containing four cysteine clusters involved in the formation of iron-sulfur centers. Electrons are transferred from the gamma chain to the molybdenum cofactor of the alpha subunit. The sequence is that of Respiratory nitrate reductase 1 beta chain (narH) from Shigella flexneri.